Here is a 339-residue protein sequence, read N- to C-terminus: Ketol-acid reductoisomerase (NADP(+)) (339 aa).

The KARI N-terminal Rossmann domain maps to 1-182 (MRVYYDRDAD…GGGRSGIIET (182 aa)). Residues 24–27 (YGSQ), Arg48, Ser51, Thr53, and 83–86 (DELQ) each bind NADP(+). His108 is an active-site residue. Gly134 serves as a coordination point for NADP(+). One can recognise a KARI C-terminal knotted domain in the interval 183–328 (SFREECETDL…EKLRAMMPWI (146 aa)). The Mg(2+) site is built by Asp191, Glu195, Glu227, and Glu231. Ser252 contacts substrate.

It belongs to the ketol-acid reductoisomerase family. The cofactor is Mg(2+).

It carries out the reaction (2R)-2,3-dihydroxy-3-methylbutanoate + NADP(+) = (2S)-2-acetolactate + NADPH + H(+). It catalyses the reaction (2R,3R)-2,3-dihydroxy-3-methylpentanoate + NADP(+) = (S)-2-ethyl-2-hydroxy-3-oxobutanoate + NADPH + H(+). Its pathway is amino-acid biosynthesis; L-isoleucine biosynthesis; L-isoleucine from 2-oxobutanoate: step 2/4. The protein operates within amino-acid biosynthesis; L-valine biosynthesis; L-valine from pyruvate: step 2/4. In terms of biological role, involved in the biosynthesis of branched-chain amino acids (BCAA). Catalyzes an alkyl-migration followed by a ketol-acid reduction of (S)-2-acetolactate (S2AL) to yield (R)-2,3-dihydroxy-isovalerate. In the isomerase reaction, S2AL is rearranged via a Mg-dependent methyl migration to produce 3-hydroxy-3-methyl-2-ketobutyrate (HMKB). In the reductase reaction, this 2-ketoacid undergoes a metal-dependent reduction by NADPH to yield (R)-2,3-dihydroxy-isovalerate. This chain is Ketol-acid reductoisomerase (NADP(+)), found in Paramagnetospirillum magneticum (strain ATCC 700264 / AMB-1) (Magnetospirillum magneticum).